Consider the following 440-residue polypeptide: 23S rRNA (uracil(1939)-C(5))-methyltransferase RlmD (440 aa).

In terms of domain architecture, TRAM spans 11–69; the sequence is STLDTKHQPVTIERLDHQGSGLAFLHKKPLFVDGALPGEEVLIQLTENKSKYARGQLIK. 4 residues coordinate [4Fe-4S] cluster: C82, C88, C91, and C169. Residues Q272, F301, N306, E322, N349, and D370 each coordinate S-adenosyl-L-methionine. C396 serves as the catalytic Nucleophile.

Belongs to the class I-like SAM-binding methyltransferase superfamily. RNA M5U methyltransferase family. RlmD subfamily.

The catalysed reaction is uridine(1939) in 23S rRNA + S-adenosyl-L-methionine = 5-methyluridine(1939) in 23S rRNA + S-adenosyl-L-homocysteine + H(+). Functionally, catalyzes the formation of 5-methyl-uridine at position 1939 (m5U1939) in 23S rRNA. The chain is 23S rRNA (uracil(1939)-C(5))-methyltransferase RlmD from Vibrio cholerae serotype O1 (strain M66-2).